The primary structure comprises 86 residues: MSLPLNPKPFLNGLTGKPVMVKLKWGMEYKGYLVSVDGYMNMQLANTEEYIDGALSGHLGEVLIRCNNVLYIRGVEEEEEDGEMRE.

Residue Ser2 is modified to N-acetylserine. Positions 6–78 (NPKPFLNGLT…VLYIRGVEEE (73 aa)) constitute a Sm domain.

Belongs to the snRNP Sm proteins family. SmF/LSm6 subfamily. As to quaternary structure, core component of the spliceosomal U1, U2, U4 and U5 small nuclear ribonucleoproteins (snRNPs), the building blocks of the spliceosome. Most spliceosomal snRNPs contain a common set of Sm proteins, SNRPB, SNRPD1, SNRPD2, SNRPD3, SNRPE, SNRPF and SNRPG that assemble in a heptameric protein ring on the Sm site of the small nuclear RNA to form the core snRNP. Component of the U1 snRNP. The U1 snRNP is composed of the U1 snRNA and the 7 core Sm proteins SNRPB, SNRPD1, SNRPD2, SNRPD3, SNRPE, SNRPF and SNRPG, and at least three U1 snRNP-specific proteins SNRNP70/U1-70K, SNRPA/U1-A and SNRPC/U1-C. Component of the U4/U6-U5 tri-snRNP complex composed of the U4, U6 and U5 snRNAs and at least PRPF3, PRPF4, PRPF6, PRPF8, PRPF31, SNRNP200, TXNL4A, SNRNP40, SNRPB, SNRPD1, SNRPD2, SNRPD3, SNRPE, SNRPF, SNRPG, DDX23, CD2BP2, PPIH, SNU13, EFTUD2, SART1 and USP39, plus LSM2, LSM3, LSM4, LSM5, LSM6, LSM7 and LSM8. Component of the U7 snRNP complex, or U7 Sm protein core complex, that is composed of the U7 snRNA and at least LSM10, LSM11, SNRPB, SNRPD3, SNRPE, SNRPF and SNRPG; the complex does not contain SNRPD1 and SNRPD2. Component of the minor spliceosome, which splices U12-type introns. Part of the SMN-Sm complex that contains SMN1, GEMIN2/SIP1, DDX20/GEMIN3, GEMIN4, GEMIN5, GEMIN6, GEMIN7, GEMIN8, STRAP/UNRIP and the Sm proteins SNRPB, SNRPD1, SNRPD2, SNRPD3, SNRPE, SNRPF and SNRPG; catalyzes core snRNPs assembly. Forms a 6S pICln-Sm complex composed of CLNS1A/pICln, SNRPD1, SNRPD2, SNRPE, SNRPF and SNRPG; ring-like structure where CLNS1A/pICln mimics additional Sm proteins and which is unable to assemble into the core snRNP. Interacts with GEMIN2 (via N-terminus); the interaction is direct. Interacts with SNRPD2; the interaction is direct. Interacts with SNRPE; the interaction is direct.

It is found in the cytoplasm. The protein localises to the cytosol. The protein resides in the nucleus. Its function is as follows. Plays a role in pre-mRNA splicing as a core component of the spliceosomal U1, U2, U4 and U5 small nuclear ribonucleoproteins (snRNPs), the building blocks of the spliceosome. Component of both the pre-catalytic spliceosome B complex and activated spliceosome C complexes. As a component of the minor spliceosome, involved in the splicing of U12-type introns in pre-mRNAs. As part of the U7 snRNP it is involved in histone 3'-end processing. The sequence is that of Small nuclear ribonucleoprotein F (SNRPF) from Homo sapiens (Human).